Consider the following 285-residue polypeptide: Putative sugar uptake protein lin0444 (285 aa).

Helical transmembrane passes span 2-21 (SIYL…PIIA), 31-50 (QLLG…FWIL), 55-77 (TVLS…LLQF), 111-133 (WQTV…GVVM), 146-168 (SVSF…YVVT), 172-194 (FDVT…AIGI), 207-229 (VTFN…LATA), 233-255 (VATS…ILIF), and 262-284 (LEWT…LSLL).

This sequence belongs to the GRP transporter (TC 2.A.7.5) family.

Its subcellular location is the cell membrane. The polypeptide is Putative sugar uptake protein lin0444 (Listeria innocua serovar 6a (strain ATCC BAA-680 / CLIP 11262)).